Here is a 325-residue protein sequence, read N- to C-terminus: MGNENSSLVKIRRGSKEPNVIIECVDSKKDHLSTPVYRKKSRRSVSQSRPTSIIEPPKRSIVPPIPALIKGQLSGDDSISIGSRKSSVSNFRLSSDGSGDSLLSPLTASSNDRRRSRSLCSAQMKDDAQAVAAQQNKDDKTGGSGGRKASSGLVPSLNRLRIQQCFKAAKPSIGDAIMKRAAASRAEMRTMLSKMNEKQIECLGKQMFELITDAVENADKSEKVLTHARQLGGTYASLCPLGFRPDLFAPLADAAIAECVKLDGVHKRCETLSAWSQLFSALFTGVRDGYYQRVRHQRRTSLPQNTITKQLSVDFSKTSDTSFVR.

Disordered stretches follow at residues 32–65 (LSTP…VPPI) and 99–152 (GDSL…ASSG). Residues 153 to 291 (LVPSLNRLRI…LFTGVRDGYY (139 aa)) form the Globin domain.

This is an uncharacterized protein from Caenorhabditis elegans.